Consider the following 932-residue polypeptide: F-box protein COS111 (932 aa).

Residues 29–63 (VSAKHRPSSTGVYGHDASTVDHASRSNNNLNLTRS) are disordered. The span at 53–63 (RSNNNLNLTRS) shows a compositional bias: low complexity. The F-box domain occupies 146–193 (RKEISDLPDEVLRNILSNVKDDQRTLVNCLYVNKAFYNATKPTLYERP). Residues 346–358 (LSEGKSSDNGNNG) are compositionally biased toward polar residues. Disordered regions lie at residues 346 to 369 (LSEGKSSDNGNNGKRQRSNSSVSS), 389 to 450 (TLSG…SNWF), 470 to 500 (ISSKKDEQQNEESAQTAQKIETPIIKRTEPF), and 863 to 893 (SVLPEDVPEDNNADDTNNGENTIAQPFSNDP). Composition is skewed to low complexity over residues 395–431 (NNSSKTQSKGKSSSSPGNPNDSSGEQDSIISSSSQID) and 438–447 (TSSKSTSSTS). The segment covering 876 to 890 (DDTNNGENTIAQPFS) has biased composition (polar residues).

Its function is as follows. F-box protein probably involved in ubiquitin conjugation pathway. This chain is F-box protein COS111 (COS111), found in Candida glabrata (strain ATCC 2001 / BCRC 20586 / JCM 3761 / NBRC 0622 / NRRL Y-65 / CBS 138) (Yeast).